The chain runs to 842 residues: Protein translocase subunit SecA (842 aa).

ATP-binding positions include glutamine 85, 103–107 (GEGKT), and aspartate 493. Residues cysteine 825, cysteine 827, cysteine 836, and histidine 837 each coordinate Zn(2+).

It belongs to the SecA family. Monomer and homodimer. Part of the essential Sec protein translocation apparatus which comprises SecA, SecYEG and auxiliary proteins SecDF. Other proteins may also be involved. Requires Zn(2+) as cofactor.

Its subcellular location is the cell membrane. It localises to the cytoplasm. It catalyses the reaction ATP + H2O + cellular proteinSide 1 = ADP + phosphate + cellular proteinSide 2.. In terms of biological role, part of the Sec protein translocase complex. Interacts with the SecYEG preprotein conducting channel. Has a central role in coupling the hydrolysis of ATP to the transfer of proteins into and across the cell membrane, serving as an ATP-driven molecular motor driving the stepwise translocation of polypeptide chains across the membrane. This Streptococcus uberis (strain ATCC BAA-854 / 0140J) protein is Protein translocase subunit SecA.